Here is a 410-residue protein sequence, read N- to C-terminus: LL-diaminopimelate aminotransferase (410 aa).

Residues Tyr-15 and Gly-42 each contribute to the substrate site. Pyridoxal 5'-phosphate-binding positions include Tyr-72, 108–109 (AK), Tyr-132, Asn-187, Tyr-218, and 246–248 (SFS). 3 residues coordinate substrate: Lys-109, Tyr-132, and Asn-187. Lys-249 is modified (N6-(pyridoxal phosphate)lysine). Residues Arg-257 and Asn-292 each contribute to the pyridoxal 5'-phosphate site. 2 residues coordinate substrate: Asn-292 and Arg-388.

This sequence belongs to the class-I pyridoxal-phosphate-dependent aminotransferase family. LL-diaminopimelate aminotransferase subfamily. Homodimer. It depends on pyridoxal 5'-phosphate as a cofactor.

It catalyses the reaction (2S,6S)-2,6-diaminopimelate + 2-oxoglutarate = (S)-2,3,4,5-tetrahydrodipicolinate + L-glutamate + H2O + H(+). Its pathway is amino-acid biosynthesis; L-lysine biosynthesis via DAP pathway; LL-2,6-diaminopimelate from (S)-tetrahydrodipicolinate (aminotransferase route): step 1/1. Involved in the synthesis of meso-diaminopimelate (m-DAP or DL-DAP), required for both lysine and peptidoglycan biosynthesis. Catalyzes the direct conversion of tetrahydrodipicolinate to LL-diaminopimelate. This is LL-diaminopimelate aminotransferase from Picosynechococcus sp. (strain ATCC 27264 / PCC 7002 / PR-6) (Agmenellum quadruplicatum).